A 100-amino-acid polypeptide reads, in one-letter code: UPF0473 protein lwe1514 (100 aa).

This sequence belongs to the UPF0473 family.

This chain is UPF0473 protein lwe1514, found in Listeria welshimeri serovar 6b (strain ATCC 35897 / DSM 20650 / CCUG 15529 / CIP 8149 / NCTC 11857 / SLCC 5334 / V8).